We begin with the raw amino-acid sequence, 860 residues long: Protein argonaute-3 (860 aa).

Methionine 1 carries the N-acetylmethionine modification. One can recognise a PAZ domain in the interval 230 to 349 (PVIQFMCEVL…LPLEVCNIVA (120 aa)). The Piwi domain occupies 518–819 (LIIVILPGKT…VAFRARYHLV (302 aa)). Residues 530–567 (YAEVKRVGDTLLGMATQCVQVKNVIKTSPQTLSNLCLK) form an interaction with guide RNA region. Residues aspartate 598, glutamate 638, and aspartate 670 each contribute to the a divalent metal cation site. Residues 758 to 805 (QGTSRPSHYHVLWDDNFFTADELQLLTYQLCHTYVRCTRSVSIPAPAY) form an interaction with guide RNA region. Histidine 808 serves as a coordination point for a divalent metal cation. Serine 825 bears the Phosphoserine mark.

Belongs to the argonaute family. Ago subfamily. As to quaternary structure, interacts with EIF4B, IMP8, PRMT5 and TNRC6B. Interacts with APOBEC3F, APOBEC3G and APOBEC3H. Interacts with EDC4. Post-translationally, ubiquitinated on surface-exposed lysines by a SCF-like E3 ubiquitin-protein ligase complex containing ZSWIM8 during target-directed microRNA degradation (TDMD), a process that mediates degradation of microRNAs (miRNAs). Ubiquitination by the SCF-like E3 ubiquitin-protein ligase complex containing ZSWIM8 leads to its subsequent degradation, thereby exposing miRNAs for degradation. ZSWIM8 recognizes and binds AGO3 when it is engaged with a TDMD target.

It localises to the cytoplasm. It is found in the P-body. It carries out the reaction Endonucleolytic cleavage to 5'-phosphomonoester.. Its function is as follows. Required for RNA-mediated gene silencing (RNAi). Binds to short RNAs such as microRNAs (miRNAs) and represses the translation of mRNAs which are complementary to them. Proposed to be involved in stabilization of small RNA derivates (siRNA) derived from processed RNA polymerase III-transcribed Alu repeats containing a DR2 retinoic acid response element (RARE) in stem cells and in the subsequent siRNA-dependent degradation of a subset of RNA polymerase II-transcribed coding mRNAs by recruiting a mRNA decapping complex involving EDC4. Possesses RNA slicer activity but only on select RNAs bearing 5'- and 3'-flanking sequences to the region of guide-target complementarity. In Mus musculus (Mouse), this protein is Protein argonaute-3 (Ago3).